A 942-amino-acid chain; its full sequence is Sucrose synthase 6 (942 aa).

Residues 281–759 (TVFNVVIFSV…GLKRIYECYT (479 aa)) are GT-B glycosyltransferase. The tract at residues 830 to 862 (TTNLGAGSKQKEVTETEKTKQKSKDGQEQHDVK) is disordered. Positions 838–862 (KQKEVTETEKTKQKSKDGQEQHDVK) are enriched in basic and acidic residues.

Belongs to the glycosyltransferase 1 family. Plant sucrose synthase subfamily. Detected in the whole plant but more precisely confined to the vasculature in cotyledons, leaves, petals, anthers and roots.

The protein resides in the secreted. It localises to the cell wall. The enzyme catalyses an NDP-alpha-D-glucose + D-fructose = a ribonucleoside 5'-diphosphate + sucrose + H(+). In terms of biological role, sucrose-cleaving enzyme that provides UDP-glucose and fructose for various metabolic pathways. Functions in callose synthesis at the site of phloem sieve elements. In Arabidopsis thaliana (Mouse-ear cress), this protein is Sucrose synthase 6 (SUS6).